Here is a 431-residue protein sequence, read N- to C-terminus: Glutamate--tRNA ligase 1 (431 aa).

The 'HIGH' region signature appears at 6–16 (PSPTGDMHIGN). The short motif at 235–239 (KMSKR) is the 'KMSKS' region element. Residue Lys238 coordinates ATP.

The protein belongs to the class-I aminoacyl-tRNA synthetase family. Glutamate--tRNA ligase type 1 subfamily. Monomer.

The protein localises to the cytoplasm. The enzyme catalyses tRNA(Glu) + L-glutamate + ATP = L-glutamyl-tRNA(Glu) + AMP + diphosphate. Its function is as follows. Catalyzes the attachment of glutamate to tRNA(Glu) in a two-step reaction: glutamate is first activated by ATP to form Glu-AMP and then transferred to the acceptor end of tRNA(Glu). This is Glutamate--tRNA ligase 1 from Campylobacter curvus (strain 525.92).